Consider the following 467-residue polypeptide: UDP-N-acetylmuramate--L-alanine ligase (467 aa).

114–120 (GTHGKTT) lines the ATP pocket.

Belongs to the MurCDEF family.

The protein localises to the cytoplasm. It carries out the reaction UDP-N-acetyl-alpha-D-muramate + L-alanine + ATP = UDP-N-acetyl-alpha-D-muramoyl-L-alanine + ADP + phosphate + H(+). Its pathway is cell wall biogenesis; peptidoglycan biosynthesis. In terms of biological role, cell wall formation. This is UDP-N-acetylmuramate--L-alanine ligase from Chlorobium chlorochromatii (strain CaD3).